Here is a 274-residue protein sequence, read N- to C-terminus: Nickel/cobalt efflux system RcnA (274 aa).

Over 1-12 the chain is Periplasmic; that stretch reads MTEFTTLLQQGN. A helical membrane pass occupies residues 13–33; sequence AWFFIPSAILLGALHGLEPGH. At 34-56 the chain is on the cytoplasmic side; the sequence is SKTMMAAFIIAIKGTIKQAVMLG. The chain crosses the membrane as a helical span at residues 57-77; it reads LAATISHTAVVWLIAFGGMVI. Residues 78 to 86 lie on the Periplasmic side of the membrane; the sequence is SKRFTAQSA. Residues 87–107 traverse the membrane as a helical segment; it reads EPWLQLISAVIIISTAFWMFW. Over 108-175 the chain is Cytoplasmic; the sequence is RTWRGERNWL…DGREVTNWQI (68 aa). Residues 127–153 are disordered; that stretch reads HHHHDHEHHHDHGHHHHHEHGEYQDAH. Over residues 129–144 the composition is skewed to basic residues; sequence HHDHEHHHDHGHHHHH. Residues 176-196 traverse the membrane as a helical segment; that stretch reads LLFGLTGGLIPCPAAITVLLI. Residues 197–209 are Periplasmic-facing; it reads CIQLKALTLGATL. The chain crosses the membrane as a helical span at residues 210-230; that stretch reads VVSFSIGLALTLVTVGVGAAI. Topologically, residues 231–251 are cytoplasmic; it reads SVQQVAKRWSGFNTLAKRAPY. The chain crosses the membrane as a helical span at residues 252–272; sequence FSSLLIGLVGVYMGVHGFMGI. The Periplasmic segment spans residues 273-274; it reads MR.

The protein belongs to the NiCoT transporter (TC 2.A.52) family. RcnA subfamily.

The protein localises to the cell inner membrane. Functionally, efflux system for nickel and cobalt. The sequence is that of Nickel/cobalt efflux system RcnA (rcnA) from Escherichia coli (strain K12).